The following is a 263-amino-acid chain: Hydroxyethylthiazole kinase 1 (263 aa).

Position 42 (methionine 42) interacts with substrate. ATP is bound by residues lysine 118 and threonine 164. Glycine 191 contacts substrate.

This sequence belongs to the Thz kinase family. It depends on Mg(2+) as a cofactor.

It carries out the reaction 5-(2-hydroxyethyl)-4-methylthiazole + ATP = 4-methyl-5-(2-phosphooxyethyl)-thiazole + ADP + H(+). It functions in the pathway cofactor biosynthesis; thiamine diphosphate biosynthesis; 4-methyl-5-(2-phosphoethyl)-thiazole from 5-(2-hydroxyethyl)-4-methylthiazole: step 1/1. Catalyzes the phosphorylation of the hydroxyl group of 4-methyl-5-beta-hydroxyethylthiazole (THZ). This Clostridium botulinum (strain Langeland / NCTC 10281 / Type F) protein is Hydroxyethylthiazole kinase 1.